A 380-amino-acid chain; its full sequence is Chaperone protein DnaJ 2 (380 aa).

The J domain maps to 10-75 (DYYKILGVSK…KKRKEYDQAR (66 aa)). Residues 32 to 56 (KIARDNHPDSHPGDKAAEARFKEAS) are compositionally biased toward basic and acidic residues. Positions 32–63 (KIARDNHPDSHPGDKAAEARFKEASEANDVLS) are disordered. The CR-type zinc finger occupies 151 to 230 (GTTVTMDMVS…CHGSGRAKST (80 aa)). The Zn(2+) site is built by C164, C167, C181, C184, C204, C207, C218, and C221. CXXCXGXG motif repeat units follow at residues 164–171 (CQACRGTG), 181–188 (CSTCQGSG), 204–211 (CPDCHGRG), and 218–225 (CQVCHGSG).

This sequence belongs to the DnaJ family. As to quaternary structure, homodimer. Zn(2+) serves as cofactor.

It localises to the cytoplasm. Its function is as follows. Participates actively in the response to hyperosmotic and heat shock by preventing the aggregation of stress-denatured proteins and by disaggregating proteins, also in an autonomous, DnaK-independent fashion. Unfolded proteins bind initially to DnaJ; upon interaction with the DnaJ-bound protein, DnaK hydrolyzes its bound ATP, resulting in the formation of a stable complex. GrpE releases ADP from DnaK; ATP binding to DnaK triggers the release of the substrate protein, thus completing the reaction cycle. Several rounds of ATP-dependent interactions between DnaJ, DnaK and GrpE are required for fully efficient folding. Also involved, together with DnaK and GrpE, in the DNA replication of plasmids through activation of initiation proteins. In Cutibacterium acnes (strain DSM 16379 / KPA171202) (Propionibacterium acnes), this protein is Chaperone protein DnaJ 2.